The following is a 168-amino-acid chain: HTH-type transcriptional regulator IscR (168 aa).

The region spanning 2–131 (KLTSKGRYAV…NNITLGELMT (130 aa)) is the HTH rrf2-type domain. The H-T-H motif DNA-binding region spans 28–51 (LADISERQGISLSYLEQLFSKLRK). Residues cysteine 92, cysteine 98, and cysteine 104 each contribute to the [2Fe-2S] cluster site.

[2Fe-2S] cluster serves as cofactor.

Its function is as follows. Regulates the transcription of several operons and genes involved in the biogenesis of Fe-S clusters and Fe-S-containing proteins. The sequence is that of HTH-type transcriptional regulator IscR from Vibrio parahaemolyticus serotype O3:K6 (strain RIMD 2210633).